We begin with the raw amino-acid sequence, 617 residues long: Kelch-like protein 9 (617 aa).

In terms of domain architecture, BTB spans 50-119 (CDVTLVPGDG…IYTAKLSLNM (70 aa)). One can recognise a BACK domain in the interval 154-255 (CVEVGRIANT…TPQDLINYVQ (102 aa)). Kelch repeat units lie at residues 299 to 347 (HLVT…VIGN), 348 to 399 (FLYV…ALKG), 400 to 446 (HLYA…VYGG), 448 to 493 (MYIS…TVGD), 495 to 545 (LYVI…VFEN), and 546 to 594 (KIYV…TLTV). Residues 595–617 (FPPEENPGSPSRESPLSAPSDHS) are disordered.

As to quaternary structure, component of the BCR(KLHL9-KLHL13) E3 ubiquitin ligase complex, at least composed of CUL3, KLHL9, KLHL13 and RBX1. Interacts with AURKB.

The protein operates within protein modification; protein ubiquitination. In terms of biological role, substrate-specific adapter of a BCR (BTB-CUL3-RBX1) E3 ubiquitin-protein ligase complex required for mitotic progression and cytokinesis. The BCR(KLHL9-KLHL13) E3 ubiquitin ligase complex mediates the ubiquitination of AURKB and controls the dynamic behavior of AURKB on mitotic chromosomes and thereby coordinates faithful mitotic progression and completion of cytokinesis. This chain is Kelch-like protein 9 (Klhl9), found in Mus musculus (Mouse).